The primary structure comprises 199 residues: Putative 3-methyladenine DNA glycosylase (199 aa).

The protein belongs to the DNA glycosylase MPG family.

The protein is Putative 3-methyladenine DNA glycosylase of Rhizobium etli (strain ATCC 51251 / DSM 11541 / JCM 21823 / NBRC 15573 / CFN 42).